A 349-amino-acid polypeptide reads, in one-letter code: Ion-translocating oxidoreductase complex subunit D (349 aa).

Helical transmembrane passes span 36–56 (CAFF…VALS), 77–99 (SAML…WMIV), and 124–144 (AMAA…SWIA). Position 185 is an FMN phosphoryl threonine (Thr-185). The next 5 helical transmembrane spans lie at 212 to 232 (GTGV…LVLL), 239 to 259 (WHIS…GFLL), 265 to 285 (ASPL…FIAT), 291 to 311 (ATSP…VYII), and 315 to 335 (GGYP…APFI).

The protein belongs to the NqrB/RnfD family. The complex is composed of six subunits: RnfA, RnfB, RnfC, RnfD, RnfE and RnfG. It depends on FMN as a cofactor.

The protein localises to the cell inner membrane. In terms of biological role, part of a membrane-bound complex that couples electron transfer with translocation of ions across the membrane. The polypeptide is Ion-translocating oxidoreductase complex subunit D (Shewanella sp. (strain ANA-3)).